A 434-amino-acid polypeptide reads, in one-letter code: Putative magnesium transporter MRS2-D (434 aa).

3 disordered regions span residues 1-21, 126-171, and 279-311; these read MAARRRHVAAGAGAPAPAAGE, AASP…DGEA, and EASELEDHSSRDEEGVEGGGGGDGDDETIAGGG. Residues 9–21 are compositionally biased toward low complexity; that stretch reads AAGAGAPAPAAGE. Basic and acidic residues predominate over residues 279-291; sequence EASELEDHSSRDE. 2 helical membrane-spanning segments follow: residues 367–387 and 405–425; these read GILLSTGTLVSSCAIAVTGVF and FPCAAAGIVAGSLALYLAALL.

It belongs to the CorA metal ion transporter (MIT) (TC 1.A.35.5) family.

Its subcellular location is the membrane. Putative magnesium transporter. In Oryza sativa subsp. indica (Rice), this protein is Putative magnesium transporter MRS2-D (MRS2-D).